A 366-amino-acid polypeptide reads, in one-letter code: Mannonate dehydratase (366 aa).

The protein belongs to the mannonate dehydratase family. It depends on Fe(2+) as a cofactor. Requires Mn(2+) as cofactor.

It carries out the reaction D-mannonate = 2-dehydro-3-deoxy-D-gluconate + H2O. The protein operates within carbohydrate metabolism; pentose and glucuronate interconversion. Its function is as follows. Catalyzes the dehydration of D-mannonate. This Streptococcus pneumoniae (strain 70585) protein is Mannonate dehydratase.